Reading from the N-terminus, the 695-residue chain is Nucleoprotein (695 aa).

Coiled-coil stretches lie at residues valine 316–glutamate 341 and glutamine 372–glutamine 399. Disordered stretches follow at residues glutamine 424 to aspartate 458 and threonine 483 to alanine 615. Over residues valine 438–threonine 447 the composition is skewed to basic and acidic residues. Polar residues-rich tracts occupy residues proline 494–glycine 505 and threonine 537–glutamate 552. Residues proline 603–proline 606 carry the PTAP/PSAP motif motif.

The protein belongs to the filoviruses nucleoprotein family. In terms of assembly, homooligomer. Homomultimerizes to form the nucleocapsid. Binds to viral genomic RNA. Interacts with VP35 and VP30 to form the nucleocapsid. Also interacts with VP24 and VP40. In terms of processing, phosphorylated.

The protein resides in the virion. Its subcellular location is the host cytoplasm. In terms of biological role, encapsidates the genome, protecting it from nucleases. The encapsidated genomic RNA is termed the nucleocapsid and serves as template for transcription and replication. During replication, encapsidation by NP is coupled to RNA synthesis and all replicative products are resistant to nucleases. The sequence is that of Nucleoprotein (NP) from Lake Victoria marburgvirus (strain Ozolin-75) (MARV).